The following is a 186-amino-acid chain: Lactoylglutathione lyase (186 aa).

A VOC domain is found at Phe-28–Arg-175. Residues Gln-31 and Arg-35 each contribute to the substrate site. A Zn(2+)-binding site is contributed by Gln-31. Residue Glu-97 participates in Zn(2+) binding. Substrate is bound by residues Asn-101, Arg-121, His-125, and Lys-155–Met-156. Position 125 (His-125) interacts with Zn(2+). Position 171 (Glu-171) interacts with Zn(2+). The Proton donor/acceptor role is filled by Glu-171.

The protein belongs to the glyoxalase I family. Zn(2+) is required as a cofactor.

It carries out the reaction (R)-S-lactoylglutathione = methylglyoxal + glutathione. Its pathway is secondary metabolite metabolism; methylglyoxal degradation; (R)-lactate from methylglyoxal: step 1/2. Catalyzes the conversion of hemimercaptal, formed from methylglyoxal and glutathione, to S-lactoylglutathione. The protein is Lactoylglutathione lyase of Cicer arietinum (Chickpea).